The following is a 628-amino-acid chain: DEAD-box ATP-dependent RNA helicase 9 (628 aa).

Positions 98–126 match the Q motif motif; that stretch reads LEVAKLGISPKIVSQLASRGITKLFPIQR. In terms of domain architecture, Helicase ATP-binding spans 129-302; the sequence is LEPAMQGKDM…QKYLKNPVTI (174 aa). 142–149 provides a ligand contact to ATP; sequence AKTGTGKT. The DEAD box signature appears at 250 to 253; sequence DEAD. Residues 331 to 478 enclose the Helicase C-terminal domain; that stretch reads VLGELIKEHA…KINVEGSDLM (148 aa). Disordered regions lie at residues 496–548 and 571–628; these read GSYG…SGFG and SGFG…FGSS. The segment covering 500–509 has biased composition (low complexity); it reads RRGSFGSSSS. Residues 510–548 are compositionally biased toward gly residues; that stretch reads RGGGFGDSGFGRSGGGFGRSGGGGFGRSSGGGFGDSGFG.

It belongs to the DEAD box helicase family. DDX21/DDX50 subfamily.

It catalyses the reaction ATP + H2O = ADP + phosphate + H(+). This is DEAD-box ATP-dependent RNA helicase 9 from Oryza sativa subsp. japonica (Rice).